The primary structure comprises 33 residues: Mu/delta-theraphotoxin-Pm2a (33 aa).

3 disulfides stabilise this stretch: cysteine 2-cysteine 16, cysteine 9-cysteine 21, and cysteine 15-cysteine 27. Phenylalanine 33 is subject to Phenylalanine amide.

Expressed by the venom gland.

The protein resides in the secreted. Its function is as follows. Gating-modifier toxin with very weak activity on Nav1.7/SCN9A and Nav1.8/SCN10A. Shows 22% peak current inhibition (at 10 uM) on Nav1.8/SCN10A sodium channels. Show peak current inhibition and delays fast inactivation on Nav1.7/SCN9A (EC(50)&gt;10 uM). In Poecilotheria metallica (Metallic blue ornamental tree spider), this protein is Mu/delta-theraphotoxin-Pm2a.